Here is a 181-residue protein sequence, read N- to C-terminus: Peptide methionine sulfoxide reductase MsrA (181 aa).

The active site involves C14.

The protein belongs to the MsrA Met sulfoxide reductase family.

The enzyme catalyses L-methionyl-[protein] + [thioredoxin]-disulfide + H2O = L-methionyl-(S)-S-oxide-[protein] + [thioredoxin]-dithiol. The catalysed reaction is [thioredoxin]-disulfide + L-methionine + H2O = L-methionine (S)-S-oxide + [thioredoxin]-dithiol. In terms of biological role, has an important function as a repair enzyme for proteins that have been inactivated by oxidation. Catalyzes the reversible oxidation-reduction of methionine sulfoxide in proteins to methionine. This chain is Peptide methionine sulfoxide reductase MsrA, found in Bacillus licheniformis (strain ATCC 14580 / DSM 13 / JCM 2505 / CCUG 7422 / NBRC 12200 / NCIMB 9375 / NCTC 10341 / NRRL NRS-1264 / Gibson 46).